The following is a 139-amino-acid chain: Protein cornichon homolog 4 (139 aa).

Transmembrane regions (helical) follow at residues 5–25 (VFVFSLLDCCALIFLSVYFII), 57–77 (LVTVLMLISLHWFIFLLNLPV), and 118–138 (LGFHLLCFFMYLYSMILALIN).

The protein belongs to the cornichon family. In terms of assembly, interacts with Sec23/24 complex components SEC24B and SEC24D. Interacts with CCR5. Interacts with ADRB2 in the early secretory pathway.

The protein localises to the membrane. The protein resides in the endoplasmic reticulum. It localises to the endoplasmic reticulum-Golgi intermediate compartment. Functionally, involved in G protein-coupled receptors (GPCRs) trafficking from the endoplasmic reticulum to the cell surface; it promotes the exit of GPCRs from the early secretory pathway, likely through interaction with the COPII machinery. This is Protein cornichon homolog 4 (CNIH4) from Bos taurus (Bovine).